The chain runs to 312 residues: DNA-directed RNA polymerase subunit alpha (312 aa).

The tract at residues 1–226 is alpha N-terminal domain (alpha-NTD); that stretch reads MIEFEKPIIT…EHLNLFTDLT (226 aa). The tract at residues 243–312 is alpha C-terminal domain (alpha-CTD); that stretch reads DEKVLDRTIE…DLGLGLKNDK (70 aa).

It belongs to the RNA polymerase alpha chain family. In terms of assembly, homodimer. The RNAP catalytic core consists of 2 alpha, 1 beta, 1 beta' and 1 omega subunit. When a sigma factor is associated with the core the holoenzyme is formed, which can initiate transcription.

The catalysed reaction is RNA(n) + a ribonucleoside 5'-triphosphate = RNA(n+1) + diphosphate. Its function is as follows. DNA-dependent RNA polymerase catalyzes the transcription of DNA into RNA using the four ribonucleoside triphosphates as substrates. This chain is DNA-directed RNA polymerase subunit alpha, found in Streptococcus mutans serotype c (strain ATCC 700610 / UA159).